Here is a 194-residue protein sequence, read N- to C-terminus: Flavin prenyltransferase UbiX (194 aa).

FMN contacts are provided by residues 9–11, Ser-35, 86–89, and Arg-121; these read GAS and SIKT. Residues Tyr-151 and Lys-167 each contribute to the dimethylallyl phosphate site.

This sequence belongs to the UbiX/PAD1 family.

It catalyses the reaction dimethylallyl phosphate + FMNH2 = prenylated FMNH2 + phosphate. Functionally, involved in the carboxylation of phenylphosphate. Its function is as follows. Flavin prenyltransferase that catalyzes the synthesis of the prenylated FMN cofactor (prenyl-FMN) for 4-hydroxy-3-polyprenylbenzoic acid decarboxylase UbiD. The prenyltransferase is metal-independent and links a dimethylallyl moiety from dimethylallyl monophosphate (DMAP) to the flavin N5 and C6 atoms of FMN. The protein is Flavin prenyltransferase UbiX of Thauera aromatica.